The following is a 126-amino-acid chain: Major sperm protein 2 (126 aa).

Alanine 2 bears the N-acetylalanine mark. The 118-residue stretch at 8–125 folds into the MSP domain; sequence DIATMPNQKV…RRKNLPIEYN (118 aa).

As to expression, sperm.

It localises to the cell projection. The protein resides in the pseudopodium. Its subcellular location is the cytoplasm. It is found in the cytoskeleton. Central component in molecular interactions underlying sperm crawling. Forms an extensive filament system that extends from sperm villipoda, along the leading edge of the pseudopod. The protein is Major sperm protein 2 (MSP-2) of Globodera rostochiensis (Golden nematode worm).